A 41-amino-acid chain; its full sequence is Augerpeptide hhe6.1 (41 aa).

Cystine bridges form between C11/C32, C18/C35, and C31/C40.

In terms of tissue distribution, expressed by the venom duct.

The protein resides in the secreted. The chain is Augerpeptide hhe6.1 from Hastula hectica (Sea snail).